A 1272-amino-acid polypeptide reads, in one-letter code: RING finger protein PFE0100w (1272 aa).

A disordered region spans residues 216–260; it reads INKINDVSNNDPKKDNNEKNTSSNNITHNNYNDISNNNNNNNNIN. Residues 234–260 show a composition bias toward low complexity; the sequence is KNTSSNNITHNNYNDISNNNNNNNNIN. The CHCR repeat unit spans residues 608–752; the sequence is YIQTINYLET…GYKFIKYYPQ (145 aa). Residues 771-791 form a helical membrane-spanning segment; the sequence is IFIPLFLDNIDFLFMFIVKFL. Disordered stretches follow at residues 842-862 and 908-970; these read NQNHNGIPSDSHNLSDDNNSQ and ENQT…IINK. Composition is skewed to low complexity over residues 850–861 and 909–956; these read SDSHNLSDDNNS and NQTN…IQTN. Positions 957-967 are enriched in polar residues; the sequence is KQKGNSTTNKI. Residues 1146–1182 are a coiled coil; it reads MNDMNKNINDKCIEIEKDKKELEKIKKKQLKKKYNFY. An RING-type; atypical zinc finger spans residues 1189–1224; it reads CSICKEILSVPMIHFLCKHSYHSYCLKDNNVCILCH.

It localises to the membrane. This Plasmodium falciparum (isolate 3D7) protein is RING finger protein PFE0100w.